The chain runs to 352 residues: Holliday junction branch migration complex subunit RuvB (352 aa).

The tract at residues 13–201 is large ATPase domain (RuvB-L); the sequence is FSLRKKELRL…FGISQKIEFY (189 aa). ATP-binding positions include Arg-41, Gly-82, Lys-85, Thr-86, Thr-87, 148–150, Arg-191, Tyr-201, and Arg-238; that span reads EDF. Thr-86 lines the Mg(2+) pocket. The segment at 202-273 is small ATPAse domain (RuvB-S); the sequence is TCDELKQIID…LIKKALNSYQ (72 aa). The head domain (RuvB-H) stretch occupies residues 276 to 352; sequence EKGLDYVDRQ…KYIDSKNDNF (77 aa). Residues Arg-330 and Arg-335 each coordinate DNA.

It belongs to the RuvB family. As to quaternary structure, homohexamer. Forms an RuvA(8)-RuvB(12)-Holliday junction (HJ) complex. HJ DNA is sandwiched between 2 RuvA tetramers; dsDNA enters through RuvA and exits via RuvB. An RuvB hexamer assembles on each DNA strand where it exits the tetramer. Each RuvB hexamer is contacted by two RuvA subunits (via domain III) on 2 adjacent RuvB subunits; this complex drives branch migration. In the full resolvosome a probable DNA-RuvA(4)-RuvB(12)-RuvC(2) complex forms which resolves the HJ.

The protein resides in the cytoplasm. It catalyses the reaction ATP + H2O = ADP + phosphate + H(+). The RuvA-RuvB-RuvC complex processes Holliday junction (HJ) DNA during genetic recombination and DNA repair, while the RuvA-RuvB complex plays an important role in the rescue of blocked DNA replication forks via replication fork reversal (RFR). RuvA specifically binds to HJ cruciform DNA, conferring on it an open structure. The RuvB hexamer acts as an ATP-dependent pump, pulling dsDNA into and through the RuvAB complex. RuvB forms 2 homohexamers on either side of HJ DNA bound by 1 or 2 RuvA tetramers; 4 subunits per hexamer contact DNA at a time. Coordinated motions by a converter formed by DNA-disengaged RuvB subunits stimulates ATP hydrolysis and nucleotide exchange. Immobilization of the converter enables RuvB to convert the ATP-contained energy into a lever motion, pulling 2 nucleotides of DNA out of the RuvA tetramer per ATP hydrolyzed, thus driving DNA branch migration. The RuvB motors rotate together with the DNA substrate, which together with the progressing nucleotide cycle form the mechanistic basis for DNA recombination by continuous HJ branch migration. Branch migration allows RuvC to scan DNA until it finds its consensus sequence, where it cleaves and resolves cruciform DNA. The chain is Holliday junction branch migration complex subunit RuvB from Prochlorococcus marinus (strain MIT 9312).